We begin with the raw amino-acid sequence, 33 residues long: Cytochrome b6-f complex subunit 8 (33 aa).

The chain crosses the membrane as a helical span at residues 2-22; it reads LITLGWASLAALFSFSIAMVV.

It belongs to the PetN family. The 4 large subunits of the cytochrome b6-f complex are cytochrome b6, subunit IV (17 kDa polypeptide, PetD), cytochrome f and the Rieske protein, while the 4 small subunits are PetG, PetL, PetM and PetN. The complex functions as a dimer.

The protein resides in the plastid. It localises to the organellar chromatophore thylakoid membrane. Functionally, component of the cytochrome b6-f complex, which mediates electron transfer between photosystem II (PSII) and photosystem I (PSI), cyclic electron flow around PSI, and state transitions. The sequence is that of Cytochrome b6-f complex subunit 8 from Paulinella chromatophora.